The sequence spans 295 residues: GTPase Era (295 aa).

Residues 3 to 171 form the Era-type G domain; sequence KSGFITVIGR…LELMKKYLPE (169 aa). Positions 11 to 18 are G1; it reads GRPNVGKS. 11–18 provides a ligand contact to GTP; it reads GRPNVGKS. The segment at 37–41 is G2; that stretch reads QTTRN. Residues 58–61 are G3; the sequence is DTPG. GTP-binding positions include 58–62 and 120–123; these read DTPGM and NKID. The G4 stretch occupies residues 120-123; that stretch reads NKID. Residues 150–152 are G5; it reads ISA. The 78-residue stretch at 202–279 folds into the KH type-2 domain; the sequence is LSEEVPHGIA…SLKVWVKVKK (78 aa).

The protein belongs to the TRAFAC class TrmE-Era-EngA-EngB-Septin-like GTPase superfamily. Era GTPase family. Monomer.

It localises to the cytoplasm. The protein resides in the cell membrane. In terms of biological role, an essential GTPase that binds both GDP and GTP, with rapid nucleotide exchange. Plays a role in 16S rRNA processing and 30S ribosomal subunit biogenesis and possibly also in cell cycle regulation and energy metabolism. This chain is GTPase Era, found in Clostridium tetani (strain Massachusetts / E88).